The following is a 679-amino-acid chain: UvrABC system protein B (679 aa).

Residues E31–I414 enclose the Helicase ATP-binding domain. G44–T51 is a binding site for ATP. Residues Y97–I120 carry the Beta-hairpin motif. Residues Q436 to I589 form the Helicase C-terminal domain. In terms of domain architecture, UVR spans Q639–Q674.

It belongs to the UvrB family. Forms a heterotetramer with UvrA during the search for lesions. Interacts with UvrC in an incision complex.

The protein resides in the cytoplasm. Its function is as follows. The UvrABC repair system catalyzes the recognition and processing of DNA lesions. A damage recognition complex composed of 2 UvrA and 2 UvrB subunits scans DNA for abnormalities. Upon binding of the UvrA(2)B(2) complex to a putative damaged site, the DNA wraps around one UvrB monomer. DNA wrap is dependent on ATP binding by UvrB and probably causes local melting of the DNA helix, facilitating insertion of UvrB beta-hairpin between the DNA strands. Then UvrB probes one DNA strand for the presence of a lesion. If a lesion is found the UvrA subunits dissociate and the UvrB-DNA preincision complex is formed. This complex is subsequently bound by UvrC and the second UvrB is released. If no lesion is found, the DNA wraps around the other UvrB subunit that will check the other stand for damage. The polypeptide is UvrABC system protein B (Haemophilus influenzae (strain ATCC 51907 / DSM 11121 / KW20 / Rd)).